We begin with the raw amino-acid sequence, 42 residues long: uncharacterized protein (42 aa).

Positions 20–42 are disordered; the sequence is RSGRAERGVRAHSPAWSERPTPN.

This is an uncharacterized protein from Escherichia coli.